A 460-amino-acid polypeptide reads, in one-letter code: GTPase Der (460 aa).

2 consecutive EngA-type G domains span residues glutamine 2–phenylalanine 164 and isoleucine 196–threonine 368. GTP contacts are provided by residues glycine 8–serine 15, aspartate 55–leucine 59, asparagine 116–aspartate 119, glycine 202–serine 209, aspartate 249–isoleucine 253, and asparagine 313–aspartate 316. The KH-like domain maps to glutamine 369–glycine 453.

This sequence belongs to the TRAFAC class TrmE-Era-EngA-EngB-Septin-like GTPase superfamily. EngA (Der) GTPase family. As to quaternary structure, associates with the 50S ribosomal subunit.

Its function is as follows. GTPase that plays an essential role in the late steps of ribosome biogenesis. The protein is GTPase Der of Campylobacter jejuni subsp. jejuni serotype O:6 (strain 81116 / NCTC 11828).